The chain runs to 95 residues: Large ribosomal subunit protein bL28 (95 aa).

The interval 1–22 (MSRRCELTGKGPMTGNNVSHAN) is disordered.

It belongs to the bacterial ribosomal protein bL28 family.

The chain is Large ribosomal subunit protein bL28 from Ruegeria pomeroyi (strain ATCC 700808 / DSM 15171 / DSS-3) (Silicibacter pomeroyi).